Here is a 331-residue protein sequence, read N- to C-terminus: Pantothenate kinase (331 aa).

Glycine 109–serine 116 is an ATP binding site.

Belongs to the prokaryotic pantothenate kinase family.

Its subcellular location is the cytoplasm. It catalyses the reaction (R)-pantothenate + ATP = (R)-4'-phosphopantothenate + ADP + H(+). It participates in cofactor biosynthesis; coenzyme A biosynthesis; CoA from (R)-pantothenate: step 1/5. The sequence is that of Pantothenate kinase from Rhizobium meliloti (strain 1021) (Ensifer meliloti).